Consider the following 276-residue polypeptide: Ribosomal RNA small subunit methyltransferase A (276 aa).

Residues N27, L29, G54, E75, D101, and N123 each contribute to the S-adenosyl-L-methionine site.

It belongs to the class I-like SAM-binding methyltransferase superfamily. rRNA adenine N(6)-methyltransferase family. RsmA subfamily.

The protein localises to the cytoplasm. The enzyme catalyses adenosine(1518)/adenosine(1519) in 16S rRNA + 4 S-adenosyl-L-methionine = N(6)-dimethyladenosine(1518)/N(6)-dimethyladenosine(1519) in 16S rRNA + 4 S-adenosyl-L-homocysteine + 4 H(+). Its function is as follows. Specifically dimethylates two adjacent adenosines (A1518 and A1519) in the loop of a conserved hairpin near the 3'-end of 16S rRNA in the 30S particle. May play a critical role in biogenesis of 30S subunits. In Bartonella bacilliformis (strain ATCC 35685 / KC583 / Herrer 020/F12,63), this protein is Ribosomal RNA small subunit methyltransferase A.